A 535-amino-acid chain; its full sequence is Dimethylaniline monooxygenase [N-oxide-forming] 2 (535 aa).

The residue at position 2 (Ala-2) is an N-acetylalanine. FAD is bound by residues 9 to 13 (GAGVS), Glu-32, 40 to 41 (VW), and 61 to 62 (NT). Residues 60–61 (TN) and 195–198 (SGSD) each bind NADP(+). A Glycyl lysine isopeptide (Lys-Gly) (interchain with G-Cter in SUMO) cross-link involves residue Lys-492. The chain crosses the membrane as a helical span at residues 510 to 530 (FSVSFLLKILGLLAVVVAFFC).

This sequence belongs to the FMO family. FAD is required as a cofactor. Mg(2+) serves as cofactor.

Its subcellular location is the microsome membrane. The protein resides in the endoplasmic reticulum membrane. Its function is as follows. Catalyzes the oxidative metabolism of numerous xenobiotics, including mainly therapeutic drugs and insecticides that contain a soft nucleophile, most commonly nitrogen and sulfur and participates to their bioactivation. The polypeptide is Dimethylaniline monooxygenase [N-oxide-forming] 2 (Pan troglodytes (Chimpanzee)).